A 643-amino-acid chain; its full sequence is Fructose-1,6-bisphosphatase class 3 (643 aa).

It belongs to the FBPase class 3 family. Mn(2+) is required as a cofactor.

The enzyme catalyses beta-D-fructose 1,6-bisphosphate + H2O = beta-D-fructose 6-phosphate + phosphate. The protein operates within carbohydrate biosynthesis; gluconeogenesis. The protein is Fructose-1,6-bisphosphatase class 3 of Lacticaseibacillus paracasei (strain ATCC 334 / BCRC 17002 / CCUG 31169 / CIP 107868 / KCTC 3260 / NRRL B-441) (Lactobacillus paracasei).